Consider the following 238-residue polypeptide: Ribonuclease PH (238 aa).

Residues Arg86 and 124–126 (GTR) each bind phosphate.

It belongs to the RNase PH family. Homohexameric ring arranged as a trimer of dimers.

The catalysed reaction is tRNA(n+1) + phosphate = tRNA(n) + a ribonucleoside 5'-diphosphate. Functionally, phosphorolytic 3'-5' exoribonuclease that plays an important role in tRNA 3'-end maturation. Removes nucleotide residues following the 3'-CCA terminus of tRNAs; can also add nucleotides to the ends of RNA molecules by using nucleoside diphosphates as substrates, but this may not be physiologically important. Probably plays a role in initiation of 16S rRNA degradation (leading to ribosome degradation) during starvation. The protein is Ribonuclease PH of Halorhodospira halophila (strain DSM 244 / SL1) (Ectothiorhodospira halophila (strain DSM 244 / SL1)).